Here is a 187-residue protein sequence, read N- to C-terminus: UPF0301 protein Cpha266_0885 (187 aa).

The protein belongs to the UPF0301 (AlgH) family.

This chain is UPF0301 protein Cpha266_0885, found in Chlorobium phaeobacteroides (strain DSM 266 / SMG 266 / 2430).